A 341-amino-acid polypeptide reads, in one-letter code: 4-hydroxy-2-oxovalerate aldolase (341 aa).

A Pyruvate carboxyltransferase domain is found at 9–260; sequence VVITDSTLRD…ATGIDLYRVL (252 aa). 17-18 lines the substrate pocket; sequence RD. Residue D18 participates in Mn(2+) binding. H21 (proton acceptor) is an active-site residue. Substrate-binding residues include S172 and H199. Residues H199 and H201 each coordinate Mn(2+).

This sequence belongs to the 4-hydroxy-2-oxovalerate aldolase family.

It carries out the reaction (S)-4-hydroxy-2-oxopentanoate = acetaldehyde + pyruvate. The polypeptide is 4-hydroxy-2-oxovalerate aldolase (Spirochaeta aurantia).